Here is a 595-residue protein sequence, read N- to C-terminus: NADH-quinone oxidoreductase subunit C/D (595 aa).

An NADH dehydrogenase I subunit C region spans residues 1-185 (MNKNICLSAS…NPFVLTKEKE (185 aa)). Residues 209–595 (DFMFLNFGPN…IDFVMSDVDR (387 aa)) are NADH dehydrogenase I subunit D.

In the N-terminal section; belongs to the complex I 30 kDa subunit family. The protein in the C-terminal section; belongs to the complex I 49 kDa subunit family. As to quaternary structure, NDH-1 is composed of 13 different subunits. Subunits NuoB, CD, E, F, and G constitute the peripheral sector of the complex.

It is found in the cell inner membrane. The enzyme catalyses a quinone + NADH + 5 H(+)(in) = a quinol + NAD(+) + 4 H(+)(out). Functionally, NDH-1 shuttles electrons from NADH, via FMN and iron-sulfur (Fe-S) centers, to quinones in the respiratory chain. The immediate electron acceptor for the enzyme in this species is believed to be ubiquinone. Couples the redox reaction to proton translocation (for every two electrons transferred, four hydrogen ions are translocated across the cytoplasmic membrane), and thus conserves the redox energy in a proton gradient. This chain is NADH-quinone oxidoreductase subunit C/D, found in Baumannia cicadellinicola subsp. Homalodisca coagulata.